The primary structure comprises 164 residues: Succinate dehydrogenase assembly factor 2, mitochondrial (164 aa).

The N-terminal 27 residues, 1-27, are a transit peptide targeting the mitochondrion; that stretch reads MAVVTLIPTLARVLSKHSLLSPLLSVT.

This sequence belongs to the SDHAF2 family. As to quaternary structure, interacts with SDHA within the SDH catalytic dimer.

It is found in the mitochondrion matrix. Its function is as follows. Plays an essential role in the assembly of succinate dehydrogenase (SDH), an enzyme complex (also referred to as respiratory complex II) that is a component of both the tricarboxylic acid (TCA) cycle and the mitochondrial electron transport chain, and which couples the oxidation of succinate to fumarate with the reduction of ubiquinone (coenzyme Q) to ubiquinol. Required for flavinylation (covalent attachment of FAD) of the flavoprotein subunit SDHA of the SDH catalytic dimer. The polypeptide is Succinate dehydrogenase assembly factor 2, mitochondrial (Rattus norvegicus (Rat)).